The sequence spans 93 residues: MLCSIYKSSRKEGTYLYIPKKDDFSQVPDTLMQMFGKPMPVMTIKLDGRTLAQVDVEKVKASLINDGFFLQVPPPPENLLEKYKEQKAQQKGE.

The 84-residue stretch at 1–84 (MLCSIYKSSR…PPENLLEKYK (84 aa)) folds into the YcgL domain.

In Vibrio campbellii (strain ATCC BAA-1116), this protein is YcgL domain-containing protein VIBHAR_01387.